The primary structure comprises 754 residues: MSESLDLSLEGVERRSLAEFTEQAYLNYSMYVIMDRALPHIGDGLKPVQRRIVYAMSELGLDADSKHKKSARTVGDVLGKFHPHGDSACYEAMVLMAQPFSYRYPLVDGQGNWGAPDDPKSFAAMRYTEARLSRYSEVLLSELGQGTVDWVPNFDGTLDEPAVLPARLPNLLLNGTTGIAVGMATDVPPHNLREVASACVRLLDQPGATVAELCEHVPGPDFPTEAEIITPRADLQKVYETGRGSVRMRAVYRVEDGDIVIHALPHQVSGSKVLEQIAGQMQAKKLPMVADLRDESDHENPTRIVIIPRSNRVDVEELMTHLFATTDLETSYRVNLNIIGLDGKPQVKDLRQLLSEWLQFRIGTVRRRLQFRLDKVERRLHLLDGLLIAFLNLDEVIHIIRTEDQPKAVLMERFELSEVQADYILDTRLRQLARLEEMKIRGEQEELLKEQKRLQTLLGSEAKLKKLVREELIKDAETYGDDRRSPIVARAEARALSETELMPTEPVTVVLSEKGWVRCAKGHDIDAAGLSYKAGDGFKAAAPGRSNQYAVFIDSTGRSYSLPAHSLPSARGQGEPLSGRLTPPPGASFECVLLPDDDALFVIASDAGYGFVVKGEDLQAKNKAGKALLSLPNGSAVVAPRPVRDVEQDWLAAVTTEGRLLLFKVSDLPQLGKGKGNKIIGIPGERVASREEYLTDLAVLPAGATLVLQAGKRTLSLKGDDLEHYKGERGRRGNKLPRGFQRVDSLLVDIPPQD.

One can recognise a Topo IIA-type catalytic domain in the interval 38-501; the sequence is LPHIGDGLKP…EARALSETEL (464 aa). Catalysis depends on Tyr127, which acts as the O-(5'-phospho-DNA)-tyrosine intermediate.

It belongs to the type II topoisomerase GyrA/ParC subunit family. ParC type 1 subfamily. Heterotetramer composed of ParC and ParE.

The protein localises to the cell membrane. It carries out the reaction ATP-dependent breakage, passage and rejoining of double-stranded DNA.. Topoisomerase IV is essential for chromosome segregation. It relaxes supercoiled DNA. Performs the decatenation events required during the replication of a circular DNA molecule. This Pseudomonas aeruginosa (strain ATCC 15692 / DSM 22644 / CIP 104116 / JCM 14847 / LMG 12228 / 1C / PRS 101 / PAO1) protein is DNA topoisomerase 4 subunit A.